The sequence spans 606 residues: Scavenger receptor class A member 3 (606 aa).

The Cytoplasmic segment spans residues 1 to 56; the sequence is MKVRSAGGDGDALCVTEEDLAGDDEDMPTFPCTQKGRPGPRCSRCQKNLSLHTSVR. Residues 57-77 traverse the membrane as a helical; Signal-anchor for type II membrane protein segment; that stretch reads ILYLFLALLLVAVAVLASLVF. Over 78–606 the chain is Extracellular; that stretch reads RKVDSLSEDI…PGPPGSQSFY (529 aa). N-linked (GlcNAc...) asparagine glycosylation is found at asparagine 115, asparagine 182, asparagine 224, asparagine 257, asparagine 313, asparagine 337, asparagine 365, asparagine 400, asparagine 430, and asparagine 451. Residues 454-606 form a disordered region; the sequence is ILRGAPGPPG…PGPPGSQSFY (153 aa). The region spanning 455 to 513 is the Collagen-like 1 domain; it reads LRGAPGPPGPRGFKGDMGVKGPVGGRGPKGDPGSLGPLGPQGPQGQPGEAGPVGERGPV. The span at 485–519 shows a compositional bias: low complexity; the sequence is DPGSLGPLGPQGPQGQPGEAGPVGERGPVGPRGFP. The segment covering 526 to 535 has biased composition (gly residues); it reads GSFGTGGPRG. One can recognise a Collagen-like 2 domain in the interval 544–603; it reads GPPGPEGPPGSPGPSGPQGKPGIAGKTGSPGQRGAMGPKGEPGIQGPPGLPGPPGPPGSQ. Composition is skewed to pro residues over residues 545 to 558 and 591 to 600; these read PPGPEGPPGSPGPS and PGLPGPPGPP.

Expressed ubiquitously.

The protein resides in the endoplasmic reticulum membrane. It is found in the golgi apparatus membrane. Functionally, seems to protect cells by scavenging oxidative molecules or harmful products of oxidation. In Homo sapiens (Human), this protein is Scavenger receptor class A member 3 (SCARA3).